A 206-amino-acid polypeptide reads, in one-letter code: Large ribosomal subunit protein uL4 (206 aa).

A disordered region spans residues 63-97; that stretch reads MYKQKGTGRARHHSARAPQFRGGGKAHGPVVRSHE. Positions 64 to 77 are enriched in basic residues; the sequence is YKQKGTGRARHHSA.

This sequence belongs to the universal ribosomal protein uL4 family. In terms of assembly, part of the 50S ribosomal subunit.

In terms of biological role, one of the primary rRNA binding proteins, this protein initially binds near the 5'-end of the 23S rRNA. It is important during the early stages of 50S assembly. It makes multiple contacts with different domains of the 23S rRNA in the assembled 50S subunit and ribosome. Functionally, forms part of the polypeptide exit tunnel. This Rhizobium leguminosarum bv. trifolii (strain WSM2304) protein is Large ribosomal subunit protein uL4.